A 155-amino-acid polypeptide reads, in one-letter code: FUN14 domain-containing protein 1 (155 aa).

Residues 1–47 lie on the Cytoplasmic side of the membrane; sequence MASRNPPPQDYESDDESYEVLDLTEYARRHHWWNRVFGHSSGPMVEK. Phosphoserine occurs at positions 13 and 17. Residue Y18 is modified to Phosphotyrosine; by SRC. Positions 18-21 match the YXXL motif; sequence YEVL. The helical transmembrane segment at 48–68 threads the bilayer; sequence YSVATQIVMGGVTGWCAGFLF. Topologically, residues 69-74 are mitochondrial intermembrane; the sequence is QKVGKL. Residues 75 to 95 traverse the membrane as a helical segment; sequence AATAVGGGFLLLQVASHSGYV. Topologically, residues 96–133 are cytoplasmic; the sequence is QIDWKRVEKDVNKAKRQIKKRANKAAPEINNIIEEATD. K119 is covalently cross-linked (Glycyl lysine isopeptide (Lys-Gly) (interchain with G-Cter in ubiquitin)). Residues 134 to 154 traverse the membrane as a helical segment; sequence FIKQNIVISSGFVGGFLLGLA. Position 155 (S155) is a topological domain, mitochondrial intermembrane.

The protein belongs to the FUN14 family. As to quaternary structure, interacts (via YXXL motif) with MAP1 LC3 family proteins MAP1LC3A, MAP1LC3B and GABARAP. Interacts with DNM1L/DPR1. Interacts with GPX4. Post-translationally, phosphorylation at Ser-13 by CK2 and at Tyr-18 by SRC inhibits activation of mitophagy. Following hypoxia, dephosphorylated at Tyr-18, leading to interaction with MAP1 LC3 family proteins and triggering mitophagy. Dephosphorylation is mediated by PGAM5. Phosphorylated by ULK1 at Ser-17 which enhances FUNDC1 binding to LC3. Ubiquitinated on Lys-119. Deubiquitinated by USP19; leading to hypoxia-induced DRP1 oligomerization and GTPase activity.

It is found in the mitochondrion outer membrane. Integral mitochondrial outer-membrane protein that mediates the formation of mitochondria-associated endoplasmic reticulum membranes (MAMs). In turn, mediates angiogenesis and neoangiogenesis through interference with intracellular Ca(2+) communication and regulation of the vascular endothelial growth factor receptor KDR/VEGFR2 expression at both mRNA and protein levels. Also acts as an activator of hypoxia-induced mitophagy, an important mechanism for mitochondrial quality and homeostasis, by interacting with and recruiting LC3 protein family to mitochondria. Mechanistically, recruits DRP1 at ER-mitochondria contact sites leading to DRP1 oligomerization and GTPase activity to facilitate mitochondrial fission during hypoxia. Additionally, plays a role in hepatic ferroptosis by interacting directly with glutathione peroxidase/GPX4 to facilitate its recruitment into mitochondria through TOM/TIM complex where it is degraded by mitophagy. The chain is FUN14 domain-containing protein 1 (Fundc1) from Mus musculus (Mouse).